The sequence spans 1163 residues: E3 ubiquitin-protein ligase TRIM33 (1163 aa).

A disordered region spans residues 1–119 (MEVEASGTED…ASTSSSSSTP (119 aa)). Over residues 27-38 (TETKEAADEAKS) the composition is skewed to basic and acidic residues. Over residues 45-54 (TPTTSSDSSS) the composition is skewed to low complexity. Over residues 72 to 87 (DPPPPPPPPPPPPPST) the composition is skewed to pro residues. Over residues 88–99 (PADSTAAAASPA) the composition is skewed to low complexity. The segment at 129 to 188 (CAVCKQSLQNRDCEPKLLPCLHSFCLKCIPQPDRKITMPVQGPHGQDTRIVNVMRCTVCH) adopts an RING-type zinc-finger fold. The B box-type 1; atypical zinc-finger motif lies at 215–268 (NSTQVCTSCEDNASAIGFCVECGEWLCKTCIEAHQRVKFTKDHKIRKKEEVSPE). 8 residues coordinate Zn(2+): Cys-220, Cys-223, Cys-244, His-257, Cys-280, His-283, Cys-303, and His-308. A B box-type 2 zinc finger spans residues 275–316 (QRPVFCPVHKQEALKLFCETCDTLTCRDCQLLEHKEHRYQFL). Residues 345–369 (ASEVQKRLKEVAETHKKVEHEIKIA) adopt a coiled-coil conformation. Positions 524–533 (MQQAAIAQKH) are enriched in low complexity. Disordered stretches follow at residues 524–555 (MQQA…QQQQ), 575–599 (QIQQ…QMIQ), 656–706 (LQRQ…VITP), 753–848 (TVGP…PLPI), and 867–918 (NVKS…KEDD). Residues 534–548 (QQQHQHHQQQQHQHQ) are compositionally biased toward basic residues. Residues 580 to 590 (MRIASQMSQHP) are compositionally biased toward polar residues. Composition is skewed to low complexity over residues 678–691 (SAAN…ASMA) and 753–797 (TVGP…SGTT). A compositionally biased stretch (basic and acidic residues) spans 821–830 (KTERTKDGRR). Residues 870 to 889 (SEPQSDNLSSCTNPNSRATL) show a composition bias toward polar residues. The PHD-type zinc-finger motif lies at 921 to 968 (EDWCAVCQNGGELLCCDHCPKVFHITCHIPTLKSSPSGDWMCTFCRNL). Residues 991 to 1114 (AMSPEEQRRC…LYFEERLLEI (124 aa)) form the Bromo domain. A disordered region spans residues 1128–1147 (TQIEAEKEDSDDSDDDIIQP). Over residues 1133 to 1144 (EKEDSDDSDDDI) the composition is skewed to acidic residues.

The protein resides in the nucleus. It carries out the reaction S-ubiquitinyl-[E2 ubiquitin-conjugating enzyme]-L-cysteine + [acceptor protein]-L-lysine = [E2 ubiquitin-conjugating enzyme]-L-cysteine + N(6)-ubiquitinyl-[acceptor protein]-L-lysine.. It functions in the pathway protein modification; protein ubiquitination. Its function is as follows. May act as an E3 ubiquitin-protein ligase and a transcriptional repressor. Involved in the regulation of embryonic and adult hematopoiesis. Required for normal development and survival of both committed erythroid progenitor cells and posterior mesenchymal cells. The chain is E3 ubiquitin-protein ligase TRIM33 (trim33) from Danio rerio (Zebrafish).